The following is a 180-amino-acid chain: Large ribosomal subunit protein uL6 (180 aa).

The protein belongs to the universal ribosomal protein uL6 family. In terms of assembly, part of the 50S ribosomal subunit.

In terms of biological role, this protein binds to the 23S rRNA, and is important in its secondary structure. It is located near the subunit interface in the base of the L7/L12 stalk, and near the tRNA binding site of the peptidyltransferase center. The protein is Large ribosomal subunit protein uL6 of Protochlamydia amoebophila (strain UWE25).